The following is a 363-amino-acid chain: 3-isopropylmalate dehydrogenase (363 aa).

79 to 92 serves as a coordination point for NAD(+); the sequence is GPKWEHLPPNDQPE. Substrate contacts are provided by arginine 100, arginine 110, arginine 139, and aspartate 228. Aspartate 228, aspartate 252, and aspartate 256 together coordinate Mg(2+). An NAD(+)-binding site is contributed by 286-298; the sequence is GSAPDIAGKNIAN.

This sequence belongs to the isocitrate and isopropylmalate dehydrogenases family. LeuB type 1 subfamily. In terms of assembly, homodimer. The cofactor is Mg(2+). Mn(2+) serves as cofactor.

It is found in the cytoplasm. It carries out the reaction (2R,3S)-3-isopropylmalate + NAD(+) = 4-methyl-2-oxopentanoate + CO2 + NADH. It functions in the pathway amino-acid biosynthesis; L-leucine biosynthesis; L-leucine from 3-methyl-2-oxobutanoate: step 3/4. Its function is as follows. Catalyzes the oxidation of 3-carboxy-2-hydroxy-4-methylpentanoate (3-isopropylmalate) to 3-carboxy-4-methyl-2-oxopentanoate. The product decarboxylates to 4-methyl-2 oxopentanoate. The chain is 3-isopropylmalate dehydrogenase from Vibrio vulnificus (strain YJ016).